We begin with the raw amino-acid sequence, 192 residues long: Putative ripening-related protein 2 (192 aa).

The N-terminal stretch at 1–26 (MATTNCLLALAIAGLVLVSLPGLSRG) is a signal peptide.

This sequence belongs to the kiwellin family.

It is found in the secreted. This Oryza sativa subsp. japonica (Rice) protein is Putative ripening-related protein 2.